Consider the following 640-residue polypeptide: Uromodulin (640 aa).

The first 24 residues, 1–24 (MGQPSLTWMLMVVVASWFITTAAT), serve as a signal peptide directing secretion. Residues 28–64 (EARWCSECHSNATCTEDEAVTTCTCQEGFTGDGLTCV) enclose the EGF-like 1 domain. 21 cysteine pairs are disulfide-bonded: cysteine 32–cysteine 41, cysteine 35–cysteine 50, cysteine 52–cysteine 63, cysteine 69–cysteine 83, cysteine 77–cysteine 92, cysteine 94–cysteine 106, cysteine 112–cysteine 126, cysteine 120–cysteine 135, cysteine 137–cysteine 148, cysteine 150–cysteine 161, cysteine 155–cysteine 170, cysteine 174–cysteine 267, cysteine 195–cysteine 282, cysteine 217–cysteine 255, cysteine 223–cysteine 287, cysteine 248–cysteine 256, cysteine 297–cysteine 306, cysteine 300–cysteine 315, cysteine 317–cysteine 347, cysteine 335–cysteine 425, and cysteine 366–cysteine 389. Asparagine 38 is a glycosylation site (N-linked (GlcNAc...) asparagine). Residues 65–107 (DLDECAIPGAHNCSANSSCVNTPGSFSCVCPEGFRLSPGLGCT) form the EGF-like 2; calcium-binding domain. N-linked (GlcNAc...) asparagine glycans are attached at residues asparagine 76 and asparagine 80. Residues 108–149 (DVDECAEPGLSHCHALATCVNVVGSYLCVCPAGYRGDGWHCE) form the EGF-like 3; calcium-binding domain. The tract at residues 150-171 (CSPGSCGPGLDCVPEGDALVCA) is beta hairpin. Residues 172 to 291 (DPCQAHRTLD…CHLAYCTDPS (120 aa)) are D10C. Asparagine 232 carries N-linked (GlcNAc...) (complex) asparagine glycosylation. N-linked (GlcNAc...) (high mannose) asparagine glycosylation occurs at asparagine 275. Residues 292-323 (SVEGTCEECSIDEDCKSNNGRWHCQCKQDFNI) form the EGF-like 4 domain. An N-linked (GlcNAc...) (complex) asparagine glycan is attached at asparagine 322. The segment at 334-429 (ECGANDMKVS…KINFACSYPL (96 aa)) is ZP-N. Positions 334 to 589 (ECGANDMKVS…PTCSGTRFRS (256 aa)) constitute a ZP domain. An N-linked (GlcNAc...) (complex) asparagine glycan is attached at asparagine 396. The flexible ZP-N/ZP-C linker; important for secretion and polymerization into filaments stretch occupies residues 430-453 (DMKVSLKTALQPMVSALNIRVGGT). Positions 454–465 (GMFTVRMALFQT) are internal hydrophobic patch (IHP). A ZP-C region spans residues 454-589 (GMFTVRMALF…PTCSGTRFRS (136 aa)). Cystine bridges form between cysteine 506-cysteine 566, cysteine 527-cysteine 582, and cysteine 571-cysteine 578. Residue asparagine 513 is glycosylated (N-linked (GlcNAc...) (complex) asparagine; alternate). The N-linked (GlcNAc...) (high mannose) asparagine; alternate glycan is linked to asparagine 513. Positions 586-589 (RFRS) are essential for cleavage by HPN. The interval 598-606 (VLNLGPITR) is external hydrophobic patch (EHP); regulates polymerization into filaments. Serine 614 carries GPI-anchor amidated serine lipidation. Residues 615–640 (RAFSSLGLLKVWLPLLLSATLTLTFQ) constitute a propeptide, removed in mature form.

As to quaternary structure, homodimer that then polymerizes into long filaments. The filaments can additionally assemble laterally to form a sheet. The filaments consist of a zigzag-shaped backbone with laterally protruding arms which interact with bacterial adhesin fimH. Two fimH molecules can bind to a single UMOD monomer. In terms of processing, N-glycosylated. N-glycan heterogeneity at Asn-232: Hex7HexNAc6 (major) and dHex1Hex7HexNAc6 (minor); at Asn-322: dHex1Hex6HexNAc5 (minor), dHex1Hex7HexNAc6 (major) and dHex1Hex8HexNAc7 (minor); at Asn-396: Hex6HexNAc5 (major), dHex1Hex6HexNAc5 (minor) and Hex7HexNAc6 (minor). Glycosylated Asn-232 interacts with E.coli adhesin fimH. Other complex glycosylation sites may serve as binding sites for proteins from other bacteria inclduding K.pneumoniae, P.aeruginosa and S.mitis. Post-translationally, proteolytically cleaved at a conserved C-terminal proteolytic cleavage site to generate the secreted form found in urine. This cleavage is catalyzed by HPN. Expressed in the tubular cells of the kidney. Most abundant protein in normal urine (at protein level). Synthesized exclusively in the kidney. Expressed exclusively by epithelial cells of the thick ascending limb of Henle's loop (TALH) and of distal convoluted tubule lumen.

The protein localises to the apical cell membrane. It is found in the basolateral cell membrane. It localises to the cell projection. Its subcellular location is the cilium membrane. The protein resides in the secreted. Functionally, functions in biogenesis and organization of the apical membrane of epithelial cells of the thick ascending limb of Henle's loop (TALH), where it promotes formation of complex filamentous gel-like structure that may play a role in the water barrier permeability. May serve as a receptor for binding and endocytosis of cytokines (IL-1, IL-2) and TNF. Facilitates neutrophil migration across renal epithelia. Its function is as follows. In the urine, may contribute to colloid osmotic pressure, retards passage of positively charged electrolytes, and inhibits formation of liquid containing supersaturated salts and subsequent formation of salt crystals. Protects against urinary tract infections by binding to type 1 fimbriated E.coli. Binds to bacterial adhesin fimH which mediates the stable formation of bacterial aggregates, prevents the binding of E.coli to uroplakins UPK1A and UPK1B which act as urothelial receptors for type I fimbriae, and allows for pathogen clearance through micturation. Also promotes aggregation of other bacteria including K.pneumoniae, P.aeruginosa and S.mitis and so may also protect against other uropathogens. This Homo sapiens (Human) protein is Uromodulin (UMOD).